The sequence spans 179 residues: uncharacterized protein (179 aa).

It belongs to the CAPAB/TerDEXZ family.

This is an uncharacterized protein from Synechocystis sp. (strain ATCC 27184 / PCC 6803 / Kazusa).